A 461-amino-acid polypeptide reads, in one-letter code: UDP-glucosyltransferase 1 (461 aa).

It belongs to the UDP-glycosyltransferase family.

It functions in the pathway secondary metabolite biosynthesis. In terms of biological role, UDP-glucosyltransferase; part of the pathway that mediates the biosynthesis of tenellin-type 2-pyridones, iron-chelating compounds involved in iron stress tolerance, competition with the natural competitor fungus Metarhizium robertsii and insect hosts infection. Targets the N-OH hydroxyl residue of 15-hydroxytellenin (15-HT) to produce pyridovericin-N-O-(beta-D-glucopyranoside) which is further methylated by the methyltransferase MT1 to yield pyridovericin-N-O-(4-O-methyl-beta-D-glucopyranoside) (PMGP). The pathway begins with the assembly of the polyketide-amino acid backbone by the hybrid PKS-NRPS tenS with the help of the enoyl reductase tenC. These enzymes catalyze the synthesis of the pyrrolidine-2-dione intermediates pretellinin A, 11-hydropretellenin A, 12-hydropretellenin A, 13-hydropretellenin A, 14-hydropretellenin A, 12-oxopretellenin A and prototellinin D. The cytochrome P450 monooxygenase tenA then catalyzes an oxidative ring expansion of pretenellin A and 14-hydropretellenin A to form the 2-pyridone core, leading to pretenellin B and pyridovericin, respectively. The cytochrome P450 monooxygenase tenB is then required for the selective N-hydroxylation of the 2-pyridone nitrogen of yield tellinin and 15-hydroxytellenin (15-HT), respectively. The UDP-glucosyltransferase GT1 and the methyltransferase MT1, located outside the tenS gene cluster, contribute to the stepwise glycosylation and methylation of 15-HT to obtain the glycoside pyridovericin-N-O-(4-O-methyl-beta-D-glucopyranoside) (PMGP). Additional related compounds such as 1-O-methyl-15-HT, (8Z)-1-O-methyl-15-HT, and O-methyltenellin A are also produced but the enzymes involved in their biosynthesis have still to be determined. The protein is UDP-glucosyltransferase 1 of Beauveria bassiana (strain ARSEF 2860) (White muscardine disease fungus).